A 777-amino-acid chain; its full sequence is Penicillin-binding protein 1B (777 aa).

Topologically, residues 1–30 (MTRKSSNRSRGRKARSGKSASSSKLQIWLG) are cytoplasmic. Residues 31-52 (RIWSIGWKLALTLAAVLVFIGI) traverse the membrane as a helical; Signal-anchor for type II membrane protein segment. The Periplasmic portion of the chain corresponds to 53-777 (YLDSMIKQRF…TEWIKKLFEW (725 aa)). Residues 162–334 (LRLEPKLMGM…SYYNPMRYAE (173 aa)) are transglycosylase. Catalysis depends on Glu200, which acts as the Proton donor; for transglycosylase activity. The interval 415 to 709 (SKLEQAIHDQ…ASGALRVYAQ (295 aa)) is transpeptidase. Catalysis depends on Ser476, which acts as the Acyl-ester intermediate; for transpeptidase activity.

In the N-terminal section; belongs to the glycosyltransferase 51 family. It in the C-terminal section; belongs to the transpeptidase family.

Its subcellular location is the cell inner membrane. The enzyme catalyses [GlcNAc-(1-&gt;4)-Mur2Ac(oyl-L-Ala-gamma-D-Glu-L-Lys-D-Ala-D-Ala)](n)-di-trans,octa-cis-undecaprenyl diphosphate + beta-D-GlcNAc-(1-&gt;4)-Mur2Ac(oyl-L-Ala-gamma-D-Glu-L-Lys-D-Ala-D-Ala)-di-trans,octa-cis-undecaprenyl diphosphate = [GlcNAc-(1-&gt;4)-Mur2Ac(oyl-L-Ala-gamma-D-Glu-L-Lys-D-Ala-D-Ala)](n+1)-di-trans,octa-cis-undecaprenyl diphosphate + di-trans,octa-cis-undecaprenyl diphosphate + H(+). The catalysed reaction is Preferential cleavage: (Ac)2-L-Lys-D-Ala-|-D-Ala. Also transpeptidation of peptidyl-alanyl moieties that are N-acyl substituents of D-alanine.. It functions in the pathway cell wall biogenesis; peptidoglycan biosynthesis. Its function is as follows. Cell wall formation. Synthesis of cross-linked peptidoglycan from the lipid intermediates. The enzyme has a penicillin-insensitive transglycosylase N-terminal domain (formation of linear glycan strands) and a penicillin-sensitive transpeptidase C-terminal domain (cross-linking of the peptide subunits). The polypeptide is Penicillin-binding protein 1B (mrcB) (Vibrio cholerae serotype O1 (strain ATCC 39315 / El Tor Inaba N16961)).